The following is a 656-amino-acid chain: Pyoverdine export ATP-binding/permease protein PvdT (656 aa).

In terms of domain architecture, ABC transporter spans 6 to 245; sequence IDLRAIRKSY…SANPAALQAV (240 aa). Residue 43–50 coordinates ATP; the sequence is GASGSGKS. 4 consecutive transmembrane segments (helical) span residues 284 to 304, 538 to 558, 589 to 609, and 619 to 639; these read ALTL…LAVG, IAAI…LMTV, LSVV…AALL, and VPAV…FGFM.

Belongs to the ABC transporter superfamily. Macrolide exporter (TC 3.A.1.122) family. In terms of assembly, part of the tripartite efflux system PvdRT-OpmQ, which is composed of an inner membrane component with both ATPase and permease domains, PvdT, a periplasmic membrane fusion protein, PvdR, and an outer membrane component, OpmQ.

Its subcellular location is the cell inner membrane. Its function is as follows. Part of the tripartite efflux system PvdRT-OpmQ required for the secretion into the extracellular milieu of the siderophore pyoverdine (PVD), which is involved in iron acquisition. This subunit binds PVD and drives its secretion by hydrolyzing ATP. The system is responsible for export of newly synthesized PVD after the final steps of biosynthesis have taken place in the periplasm. It is also responsible for recycling of PVD after internalization of ferri-PVD into the periplasm by the outer-membrane receptor FpvA and release of iron from PVD, thus making PVD available for new cycles of iron uptake. The polypeptide is Pyoverdine export ATP-binding/permease protein PvdT (Pseudomonas savastanoi pv. phaseolicola (strain 1448A / Race 6) (Pseudomonas syringae pv. phaseolicola (strain 1448A / Race 6))).